A 277-amino-acid chain; its full sequence is Digeranylgeranylglyceryl phosphate synthase (277 aa).

Helical transmembrane passes span 16–36, 40–60, 101–121, 129–149, 153–173, 205–225, and 257–277; these read ILAG…IPSI, GLVF…NDYF, FLGV…FIYA, FIGN…GALG, VGLA…REIM, IFGV…IGLG, and LKIA…TKGV.

It belongs to the UbiA prenyltransferase family. DGGGP synthase subfamily. Mg(2+) serves as cofactor.

It localises to the cell membrane. The enzyme catalyses sn-3-O-(geranylgeranyl)glycerol 1-phosphate + (2E,6E,10E)-geranylgeranyl diphosphate = 2,3-bis-O-(geranylgeranyl)-sn-glycerol 1-phosphate + diphosphate. Its pathway is membrane lipid metabolism; glycerophospholipid metabolism. In terms of biological role, prenyltransferase that catalyzes the transfer of the geranylgeranyl moiety of geranylgeranyl diphosphate (GGPP) to the C2 hydroxyl of (S)-3-O-geranylgeranylglyceryl phosphate (GGGP). This reaction is the second ether-bond-formation step in the biosynthesis of archaeal membrane lipids. This Pyrococcus abyssi (strain GE5 / Orsay) protein is Digeranylgeranylglyceryl phosphate synthase.